The sequence spans 338 residues: Ornithine carbamoyltransferase (338 aa).

Carbamoyl phosphate is bound by residues 56–59 (STRT), R107, and 134–137 (HPTQ). Residues N168, D232, and 236-237 (SM) each bind L-ornithine. Carbamoyl phosphate is bound by residues 274-275 (CL) and R320.

The protein belongs to the aspartate/ornithine carbamoyltransferase superfamily. OTCase family.

The protein localises to the cytoplasm. The catalysed reaction is carbamoyl phosphate + L-ornithine = L-citrulline + phosphate + H(+). Its pathway is amino-acid biosynthesis; L-arginine biosynthesis; L-arginine from L-ornithine and carbamoyl phosphate: step 1/3. In terms of biological role, reversibly catalyzes the transfer of the carbamoyl group from carbamoyl phosphate (CP) to the N(epsilon) atom of ornithine (ORN) to produce L-citrulline. The sequence is that of Ornithine carbamoyltransferase (argI) from Buchnera aphidicola subsp. Schizaphis graminum (strain Sg).